Here is a 256-residue protein sequence, read N- to C-terminus: Stanniocalcin (256 aa).

The signal sequence occupies residues 1-18; it reads MLAKFGLCAVFLVLGTAA. Positions 19–33 are excised as a propeptide; it reads TFDTDPEEASPRRAR. A glycan (N-linked (GlcNAc...) asparagine) is linked at asparagine 62.

This sequence belongs to the stanniocalcin family. Homodimer; disulfide-linked. Produced and secreted by the corpuscles of Stannius.

The protein localises to the secreted. Functionally, its primary function is the prevention of hypercalcemia. Upon release into the circulation, it lowers calcium transport by the gills, thereby reducing its rate of influx from the environment into the extracellular compartment. STC also stimulates phosphate reabsorption by renal proximal tubules. The consequence of this action is increased levels of plasma phosphate, which combines with excess calcium and promotes its disposal into bone and scales. The sequence is that of Stanniocalcin (stc) from Oncorhynchus kisutch (Coho salmon).